We begin with the raw amino-acid sequence, 575 residues long: 2-isopropylmalate synthase (575 aa).

In terms of domain architecture, Pyruvate carboxyltransferase spans 40–314; the sequence is PRWCAVDLRD…DPQIDFSDID (275 aa). D49, H253, H255, and N289 together coordinate Mg(2+). Residues 456-575 form a regulatory domain region; that stretch reads SGSGTPEWGR…IVSAVNRALR (120 aa).

This sequence belongs to the alpha-IPM synthase/homocitrate synthase family. LeuA type 2 subfamily. In terms of assembly, homodimer. Mg(2+) is required as a cofactor.

The protein localises to the cytoplasm. It catalyses the reaction 3-methyl-2-oxobutanoate + acetyl-CoA + H2O = (2S)-2-isopropylmalate + CoA + H(+). It participates in amino-acid biosynthesis; L-leucine biosynthesis; L-leucine from 3-methyl-2-oxobutanoate: step 1/4. Functionally, catalyzes the condensation of the acetyl group of acetyl-CoA with 3-methyl-2-oxobutanoate (2-ketoisovalerate) to form 3-carboxy-3-hydroxy-4-methylpentanoate (2-isopropylmalate). The polypeptide is 2-isopropylmalate synthase (Kineococcus radiotolerans (strain ATCC BAA-149 / DSM 14245 / SRS30216)).